A 420-amino-acid chain; its full sequence is Phosphoribosylamine--glycine ligase (420 aa).

Residues 108–314 (KQFMEKYAIP…FAALIDALLH (207 aa)) form the ATP-grasp domain. Residue 134-195 (LDERGVPIVI…EDFLAGEEFS (62 aa)) participates in ATP binding. 2 residues coordinate Mg(2+): glutamate 284 and asparagine 286.

Belongs to the GARS family. The cofactor is Mg(2+). Mn(2+) serves as cofactor.

It catalyses the reaction 5-phospho-beta-D-ribosylamine + glycine + ATP = N(1)-(5-phospho-beta-D-ribosyl)glycinamide + ADP + phosphate + H(+). It functions in the pathway purine metabolism; IMP biosynthesis via de novo pathway; N(1)-(5-phospho-D-ribosyl)glycinamide from 5-phospho-alpha-D-ribose 1-diphosphate: step 2/2. This is Phosphoribosylamine--glycine ligase from Listeria monocytogenes serotype 4b (strain F2365).